Here is a 264-residue protein sequence, read N- to C-terminus: Glutamate racemase (264 aa).

Substrate-binding positions include 10–11 (DS) and 42–43 (YG). C73 (proton donor/acceptor) is an active-site residue. Position 74 to 75 (74 to 75 (NT)) interacts with substrate. C183 (proton donor/acceptor) is an active-site residue. 184–185 (TH) contributes to the substrate binding site.

Belongs to the aspartate/glutamate racemases family.

The enzyme catalyses L-glutamate = D-glutamate. It functions in the pathway cell wall biogenesis; peptidoglycan biosynthesis. Functionally, provides the (R)-glutamate required for cell wall biosynthesis. The sequence is that of Glutamate racemase from Streptococcus pyogenes serotype M3 (strain ATCC BAA-595 / MGAS315).